The chain runs to 691 residues: NADPH--cytochrome P450 reductase (691 aa).

The Lumenal portion of the chain corresponds to 2–7 (PFGIDN). The helical transmembrane segment at 8–24 (TDFTVLAGLVLAVLLYV) threads the bilayer. Residues 25–691 (KRNSIKELLM…TSGRYQEDVW (667 aa)) lie on the Cytoplasmic side of the membrane. The Flavodoxin-like domain maps to 61–204 (YLVLYASQTG…DYMAWKDSIL (144 aa)). Residues 67 to 72 (SQTGTA), Lys78, 116 to 119 (STYG), 152 to 161 (LGNSTYEFFN), and Asp187 contribute to the FMN site. One can recognise an FAD-binding FR-type domain in the interval 266–529 (SQPYIAPIVK…HVRRSNFRLP (264 aa)). Arg285 lines the NADP(+) pocket. FAD-binding positions include 439-442 (RYYS), 457-459 (TSI), and 476-479 (GVTT). NADP(+) is bound by residues Thr543, 610–611 (SR), 617–621 (KVYVQ), and Asp646. A Glycyl lysine isopeptide (Lys-Gly) (interchain with G-Cter in ubiquitin) cross-link involves residue Lys666. Trp691 serves as a coordination point for FAD.

This sequence belongs to the NADPH--cytochrome P450 reductase family. In the N-terminal section; belongs to the flavodoxin family. It in the C-terminal section; belongs to the flavoprotein pyridine nucleotide cytochrome reductase family. As to quaternary structure, interacts with PCL1. Requires FAD as cofactor. FMN serves as cofactor. Phosphorylated by the cyclin-CDK PCL1-PHO85.

The protein localises to the endoplasmic reticulum membrane. Its subcellular location is the mitochondrion outer membrane. It is found in the cell membrane. The catalysed reaction is 2 oxidized [cytochrome P450] + NADPH = 2 reduced [cytochrome P450] + NADP(+) + H(+). This enzyme is required for electron transfer from NADP to cytochrome P450 in microsomes. It can also provide electron transfer to heme oxygenase and cytochrome B5. Involved in ergosterol biosynthesis. Has NADPH-dependent ferrireductase activity on the plasma membrane. This chain is NADPH--cytochrome P450 reductase, found in Saccharomyces cerevisiae (strain ATCC 204508 / S288c) (Baker's yeast).